The chain runs to 837 residues: Valine--tRNA ligase (837 aa).

The 'HIGH' region motif lies at 46–56 (PNLTGTLHIGH). Positions 514 to 518 (KMSKS) match the 'KMSKS' region motif. Residue Lys-517 coordinates ATP. Positions 767 to 837 (VDDTTQRLKS…QLIAKLTKAH (71 aa)) form a coiled coil.

Belongs to the class-I aminoacyl-tRNA synthetase family. ValS type 1 subfamily. In terms of assembly, monomer.

It localises to the cytoplasm. The catalysed reaction is tRNA(Val) + L-valine + ATP = L-valyl-tRNA(Val) + AMP + diphosphate. Catalyzes the attachment of valine to tRNA(Val). As ValRS can inadvertently accommodate and process structurally similar amino acids such as threonine, to avoid such errors, it has a 'posttransfer' editing activity that hydrolyzes mischarged Thr-tRNA(Val) in a tRNA-dependent manner. The sequence is that of Valine--tRNA ligase from Mycoplasma genitalium (strain ATCC 33530 / DSM 19775 / NCTC 10195 / G37) (Mycoplasmoides genitalium).